The primary structure comprises 453 residues: GTPase Der (453 aa).

EngA-type G domains follow at residues 4–169 (PIVA…PPAD) and 178–353 (IGVA…EQHR). GTP contacts are provided by residues 10-17 (GRPNVGKS), 57-61 (DTGGL), 120-123 (NKCE), 184-191 (GRPNVGKS), 231-235 (DTAGI), and 296-299 (NKWD). The 86-residue stretch at 354–439 (RRVGTSVINE…PIRLFWRGKK (86 aa)) folds into the KH-like domain.

This sequence belongs to the TRAFAC class TrmE-Era-EngA-EngB-Septin-like GTPase superfamily. EngA (Der) GTPase family. As to quaternary structure, associates with the 50S ribosomal subunit.

Its function is as follows. GTPase that plays an essential role in the late steps of ribosome biogenesis. The protein is GTPase Der of Synechococcus sp. (strain ATCC 27144 / PCC 6301 / SAUG 1402/1) (Anacystis nidulans).